The following is a 211-amino-acid chain: Redox-sensing transcriptional repressor Rex (211 aa).

Residues 17 to 56 (LYYRFVSILKGKGIDRVNSKTISEALQIDSATIRRDFSYF) constitute a DNA-binding region (H-T-H motif). 91 to 96 (GIGNLG) provides a ligand contact to NAD(+).

Belongs to the transcriptional regulatory Rex family. Homodimer.

The protein resides in the cytoplasm. Its function is as follows. Modulates transcription in response to changes in cellular NADH/NAD(+) redox state. This Staphylococcus epidermidis (strain ATCC 35984 / DSM 28319 / BCRC 17069 / CCUG 31568 / BM 3577 / RP62A) protein is Redox-sensing transcriptional repressor Rex.